The primary structure comprises 1270 residues: DNA-directed RNA polymerase subunit beta (1270 aa).

This sequence belongs to the RNA polymerase beta chain family. The RNAP catalytic core consists of 2 alpha, 1 beta, 1 beta' and 1 omega subunit. When a sigma factor is associated with the core the holoenzyme is formed, which can initiate transcription.

It catalyses the reaction RNA(n) + a ribonucleoside 5'-triphosphate = RNA(n+1) + diphosphate. In terms of biological role, DNA-dependent RNA polymerase catalyzes the transcription of DNA into RNA using the four ribonucleoside triphosphates as substrates. The protein is DNA-directed RNA polymerase subunit beta of Bacteroides thetaiotaomicron (strain ATCC 29148 / DSM 2079 / JCM 5827 / CCUG 10774 / NCTC 10582 / VPI-5482 / E50).